The sequence spans 85 residues: Large ribosomal subunit protein bL27 (85 aa).

The disordered stretch occupies residues 1–25 (MAHKKAGGSSRNGRDSHSKRLGVKH).

The protein belongs to the bacterial ribosomal protein bL27 family.

In Buchnera aphidicola subsp. Baizongia pistaciae (strain Bp), this protein is Large ribosomal subunit protein bL27.